The sequence spans 263 residues: Type II restriction enzyme TthHB8I (263 aa).

It carries out the reaction Endonucleolytic cleavage of DNA to give specific double-stranded fragments with terminal 5'-phosphates.. A P subtype restriction enzyme that recognizes the double-stranded sequence 5'-TCGA-3' and cleaves after T-1. The protein is Type II restriction enzyme TthHB8I (tthHB8IR) of Thermus thermophilus (strain ATCC 27634 / DSM 579 / HB8).